Consider the following 396-residue polypeptide: 1-deoxy-D-xylulose 5-phosphate reductoisomerase (396 aa).

Positions 10, 11, 12, 13, 38, and 123 each coordinate NADPH. Lysine 124 serves as a coordination point for 1-deoxy-D-xylulose 5-phosphate. NADPH is bound at residue glutamate 125. Residue aspartate 149 participates in Mn(2+) binding. The 1-deoxy-D-xylulose 5-phosphate site is built by serine 150, glutamate 151, serine 185, and histidine 208. Residue glutamate 151 participates in Mn(2+) binding. An NADPH-binding site is contributed by glycine 214. 1-deoxy-D-xylulose 5-phosphate is bound by residues serine 221, asparagine 226, lysine 227, and glutamate 230. Residue glutamate 230 coordinates Mn(2+).

The protein belongs to the DXR family. Mg(2+) is required as a cofactor. The cofactor is Mn(2+).

The enzyme catalyses 2-C-methyl-D-erythritol 4-phosphate + NADP(+) = 1-deoxy-D-xylulose 5-phosphate + NADPH + H(+). The protein operates within isoprenoid biosynthesis; isopentenyl diphosphate biosynthesis via DXP pathway; isopentenyl diphosphate from 1-deoxy-D-xylulose 5-phosphate: step 1/6. In terms of biological role, catalyzes the NADPH-dependent rearrangement and reduction of 1-deoxy-D-xylulose-5-phosphate (DXP) to 2-C-methyl-D-erythritol 4-phosphate (MEP). The protein is 1-deoxy-D-xylulose 5-phosphate reductoisomerase of Shewanella piezotolerans (strain WP3 / JCM 13877).